A 421-amino-acid chain; its full sequence is Dihydroorotase (421 aa).

Zn(2+) is bound by residues H59 and H61. Substrate-binding positions include 61–63 (HLR) and N93. The Zn(2+) site is built by D150, H177, and H230. N276 is a substrate binding site. D303 is a binding site for Zn(2+). D303 is an active-site residue. H307 lines the substrate pocket.

This sequence belongs to the metallo-dependent hydrolases superfamily. DHOase family. Class I DHOase subfamily. Requires Zn(2+) as cofactor.

The enzyme catalyses (S)-dihydroorotate + H2O = N-carbamoyl-L-aspartate + H(+). The protein operates within pyrimidine metabolism; UMP biosynthesis via de novo pathway; (S)-dihydroorotate from bicarbonate: step 3/3. Functionally, catalyzes the reversible cyclization of carbamoyl aspartate to dihydroorotate. This Desulfotalea psychrophila (strain LSv54 / DSM 12343) protein is Dihydroorotase.